The primary structure comprises 227 residues: PKHD-type hydroxylase Bxeno_B2756 (227 aa).

The 100-residue stretch at 80–179 folds into the Fe2OG dioxygenase domain; the sequence is QVYPPLFNRY…RVASFFWVQS (100 aa). Fe cation-binding residues include H98, D100, and H160. Position 170 (R170) interacts with 2-oxoglutarate.

Fe(2+) serves as cofactor. The cofactor is L-ascorbate.

This chain is PKHD-type hydroxylase Bxeno_B2756, found in Paraburkholderia xenovorans (strain LB400).